We begin with the raw amino-acid sequence, 342 residues long: Succinylglutamate desuccinylase (342 aa).

Residues H63, E66, and H155 each coordinate Zn(2+). E219 is an active-site residue.

This sequence belongs to the AspA/AstE family. Succinylglutamate desuccinylase subfamily. Zn(2+) serves as cofactor.

The enzyme catalyses N-succinyl-L-glutamate + H2O = L-glutamate + succinate. Its pathway is amino-acid degradation; L-arginine degradation via AST pathway; L-glutamate and succinate from L-arginine: step 5/5. Its function is as follows. Transforms N(2)-succinylglutamate into succinate and glutamate. In Vibrio campbellii (strain ATCC BAA-1116), this protein is Succinylglutamate desuccinylase.